A 55-amino-acid chain; its full sequence is Large ribosomal subunit protein bL32 (55 aa).

Residues 1 to 19 show a composition bias toward basic residues; that stretch reads MAVPKRRMSRANTHSRRSQ. Positions 1 to 20 are disordered; it reads MAVPKRRMSRANTHSRRSQW.

Belongs to the bacterial ribosomal protein bL32 family.

The sequence is that of Large ribosomal subunit protein bL32 from Corynebacterium jeikeium (strain K411).